A 1163-amino-acid chain; its full sequence is DNA-directed RNA polymerase subunit beta 2 (1163 aa).

This sequence belongs to the RNA polymerase beta chain family. In terms of assembly, the RNAP catalytic core consists of 2 alpha, 1 beta, 1 beta' and 1 omega subunit. When a sigma factor is associated with the core the holoenzyme is formed, which can initiate transcription.

It catalyses the reaction RNA(n) + a ribonucleoside 5'-triphosphate = RNA(n+1) + diphosphate. DNA-dependent RNA polymerase catalyzes the transcription of DNA into RNA using the four ribonucleoside triphosphates as substrates. The chain is DNA-directed RNA polymerase subunit beta 2 from Nocardia farcinica (strain IFM 10152).